A 125-amino-acid polypeptide reads, in one-letter code: Small ribosomal subunit protein uS12 (125 aa).

A disordered region spans residues 1–24; sequence MPTISQLVRKPRKAKRTKSKVPAL. The segment covering 9–19 has biased composition (basic residues); the sequence is RKPRKAKRTKS. D89 carries the 3-methylthioaspartic acid modification. Residues 101–125 are disordered; that stretch reads SLDTAGVKDRKQARSKYGSKRPKSA. The span at 113–125 shows a compositional bias: basic residues; it reads ARSKYGSKRPKSA.

Belongs to the universal ribosomal protein uS12 family. In terms of assembly, part of the 30S ribosomal subunit. Contacts proteins S8 and S17. May interact with IF1 in the 30S initiation complex.

In terms of biological role, with S4 and S5 plays an important role in translational accuracy. Interacts with and stabilizes bases of the 16S rRNA that are involved in tRNA selection in the A site and with the mRNA backbone. Located at the interface of the 30S and 50S subunits, it traverses the body of the 30S subunit contacting proteins on the other side and probably holding the rRNA structure together. The combined cluster of proteins S8, S12 and S17 appears to hold together the shoulder and platform of the 30S subunit. This Nitrosomonas europaea (strain ATCC 19718 / CIP 103999 / KCTC 2705 / NBRC 14298) protein is Small ribosomal subunit protein uS12.